The sequence spans 126 residues: uncharacterized protein (126 aa).

Topologically, residues 1 to 28 (MAGEAVSEHTPDSQEVTVTSVVCCLDSV) are cytoplasmic. A helical transmembrane segment spans residues 29-49 (VEIGHHVVYSVVTPLIVAVLI). Topologically, residues 50-75 (DTMAGEAVLEHTSDSQEEIVTTVVCS) are extracellular. A helical transmembrane segment spans residues 76–96 (VVPLVCFVVSVVCFVISVVEI). Residue Gly-97 is a topological domain, cytoplasmic. A helical transmembrane segment spans residues 98-118 (HHVVYSVVAPLTVTVAVETIA). The Extracellular portion of the chain corresponds to 119 to 126 (EEMDSVHT).

The protein resides in the membrane. This is an uncharacterized protein from Saccharomyces cerevisiae (strain ATCC 204508 / S288c) (Baker's yeast).